A 427-amino-acid polypeptide reads, in one-letter code: Enolase (427 aa).

Gln-163 provides a ligand contact to (2R)-2-phosphoglycerate. Residue Glu-205 is the Proton donor of the active site. Residues Asp-242, Glu-285, and Asp-312 each coordinate Mg(2+). 4 residues coordinate (2R)-2-phosphoglycerate: Lys-337, Arg-366, Ser-367, and Lys-388. Residue Lys-337 is the Proton acceptor of the active site.

This sequence belongs to the enolase family. It depends on Mg(2+) as a cofactor.

The protein resides in the cytoplasm. The protein localises to the secreted. It is found in the cell surface. It carries out the reaction (2R)-2-phosphoglycerate = phosphoenolpyruvate + H2O. The protein operates within carbohydrate degradation; glycolysis; pyruvate from D-glyceraldehyde 3-phosphate: step 4/5. In terms of biological role, catalyzes the reversible conversion of 2-phosphoglycerate (2-PG) into phosphoenolpyruvate (PEP). It is essential for the degradation of carbohydrates via glycolysis. This chain is Enolase, found in Bradyrhizobium sp. (strain BTAi1 / ATCC BAA-1182).